Consider the following 1273-residue polypeptide: DNA-directed RNA polymerase subunit beta (1273 aa).

The interval 1252–1273 is disordered; it reads ADDQDLVVSSNDEEVSENDERS.

This sequence belongs to the RNA polymerase beta chain family. The RNAP catalytic core consists of 2 alpha, 1 beta, 1 beta' and 1 omega subunit. When a sigma factor is associated with the core the holoenzyme is formed, which can initiate transcription.

It catalyses the reaction RNA(n) + a ribonucleoside 5'-triphosphate = RNA(n+1) + diphosphate. Its function is as follows. DNA-dependent RNA polymerase catalyzes the transcription of DNA into RNA using the four ribonucleoside triphosphates as substrates. This chain is DNA-directed RNA polymerase subunit beta, found in Dehalococcoides mccartyi (strain ATCC BAA-2100 / JCM 16839 / KCTC 5957 / BAV1).